The primary structure comprises 1960 residues: Intraflagellar transport protein 172 (1960 aa).

WD repeat units follow at residues 63 to 103 and 328 to 367; these read SNKD…TDKK and GFLPQITSIAWRPDVSVLTVGTSLGSVDNFTPTIGSYRYC. 3 TPR repeats span residues 1064–1098, 1362–1395, and 1397–1428; these read KADQPLLGLSAFICAGKFDEAIQFIRSNLPRQSYR, CDLFWRRGRKLEIEGRLKEAEEFYAKAGKHQEIV, and MYLDTGKFEDAQQAAMEMTSNFERERAMRSIR.

It belongs to the IFT172 family.

The protein localises to the cell projection. Its subcellular location is the cilium. It localises to the flagellum. It is found in the cytoplasm. The protein resides in the cytoskeleton. The protein localises to the flagellum axoneme. Its subcellular location is the flagellum basal body. Functionally, component of the intraflagellar transport complex B (IFT-B) involved in flagellar assembly. This chain is Intraflagellar transport protein 172, found in Giardia intestinalis (strain ATCC 50803 / WB clone C6) (Giardia lamblia).